We begin with the raw amino-acid sequence, 394 residues long: MDTLGRKVVVCDNGTGFVKCGYAGSNFPEHIFPALVGRPIIRSTAKVGNIEIKDLMVGDEASELRSMLEVNYPMENGIVRNWDDMKHLWDYTFGPEKLNIDTKNCKILLTEPPMNPTKNREKIVEVMFETYQFSGVYVAIQAVLTLYAQGLLTGVVVDSGDGVTHICPVYEGFSLPHLTRRLDIAGRDITRYLIKLLLLRGYAFNHSADFETVRMIKEKLCYVGYNIEQEQKLALETTVLVESYTLPDGRIIKVGGERFEAPEALFQPHLINVEGVGVAELLFNTIQAADIDTRSEFYKHIVLSGGSTMYPGLPSRLERELKQLYLERVLKGDVEKLSKFKIRIEDPPRRKHMVFLGGAVLADIMKDKDNFWMTRQEYQEKGVRVLEKLGVTVR.

Residues 160-162 (GDG), 214-218 (RMIKE), and 305-310 (GGSTMY) contribute to the ATP site.

Belongs to the actin family. ARP2 subfamily. As to quaternary structure, component of the Arp2/3 complex composed of ACTR2/ARP2, ACTR3/ARP3, ARPC1B/p41-ARC, ARPC2/p34-ARC, ARPC3/p21-ARC, ARPC4/p20-ARC and ARPC5/p16-ARC.

It is found in the cytoplasm. It localises to the cytoskeleton. The protein localises to the cell projection. Its subcellular location is the nucleus. In terms of biological role, ATP-binding component of the Arp2/3 complex, a multiprotein complex that mediates actin polymerization upon stimulation by nucleation-promoting factor (NPF). The Arp2/3 complex mediates the formation of branched actin networks in the cytoplasm, providing the force for cell motility. Seems to contact the pointed end of the daughter actin filament. In addition to its role in the cytoplasmic cytoskeleton, the Arp2/3 complex also promotes actin polymerization in the nucleus, thereby regulating gene transcription and repair of damaged DNA. The Arp2/3 complex promotes homologous recombination (HR) repair in response to DNA damage by promoting nuclear actin polymerization, leading to drive motility of double-strand breaks (DSBs). This chain is Actin-related protein 2 (ACTR2), found in Gallus gallus (Chicken).